We begin with the raw amino-acid sequence, 86 residues long: Serine protease inhibitor Kazal-type 4 (86 aa).

The first 26 residues, 1-26, serve as a signal peptide directing secretion; it reads MAVRLWVVALALAALFIVDREVPVSA. Residues 31 to 86 enclose the Kazal-like domain; that stretch reads FSRMPICEHMTESPDCSRIYDPVCGTDGVTYESECKLCLARIENKQDIQIVKDGEC. 3 disulfides stabilise this stretch: Cys-37–Cys-68, Cys-46–Cys-65, and Cys-54–Cys-86.

As to expression, synthesized in duodenal goblet cells and in monocytes in bone marrow and blood.

Its subcellular location is the secreted. Functionally, inhibits the glucose-induced insulin secretion from perfused pancreas; also plays a role in the immune system. Does not inhibit trypsin. This chain is Serine protease inhibitor Kazal-type 4 (SPINK4), found in Sus scrofa (Pig).